Reading from the N-terminus, the 444-residue chain is ATP-dependent protease ATPase subunit HslU (444 aa).

Residues Ile18, 60–65, Asp257, Glu322, and Arg394 each bind ATP; that span reads GVGKTE.

The protein belongs to the ClpX chaperone family. HslU subfamily. In terms of assembly, a double ring-shaped homohexamer of HslV is capped on each side by a ring-shaped HslU homohexamer. The assembly of the HslU/HslV complex is dependent on binding of ATP.

It is found in the cytoplasm. ATPase subunit of a proteasome-like degradation complex; this subunit has chaperone activity. The binding of ATP and its subsequent hydrolysis by HslU are essential for unfolding of protein substrates subsequently hydrolyzed by HslV. HslU recognizes the N-terminal part of its protein substrates and unfolds these before they are guided to HslV for hydrolysis. The polypeptide is ATP-dependent protease ATPase subunit HslU (Psychromonas ingrahamii (strain DSM 17664 / CCUG 51855 / 37)).